The chain runs to 324 residues: MQKISPSESLFIQQGVENNIRSDGRNRVDYRNFAIETGEIIHANGSARVKLSQTEVLVGVKAEITHIQSEITSNLQQSDTSKRLVFSVNCCPSASPEFEGKGSEFLNIELSKQLERLYSHPNVIKNLKLTNPIISNNNNNNNKIKEAEEGKEKEKEGDIITNSGDDNCFSIVSGKYYWTLYVDAIVLDSDGNLFDALSIACRSALQNTRIPRVKAIQGEYEEITFEVSDDPEDTLSLSIDNVPICVTLTKIGNQFVIDTTLQEELCMNARLTVGVNSLANICSIQKGGIDGLDPTTINQMINTAKVVGVKILNIMDKTLKEISN.

This sequence belongs to the RNase PH family. As to quaternary structure, component of the RNA exosome complex.

The protein resides in the nucleus. Its subcellular location is the nucleolus. The protein localises to the cytoplasm. Non-catalytic component of the RNA exosome complex which has 3'-&gt;5' exoribonuclease activity and participates in a multitude of cellular RNA processing and degradation events. The protein is Putative exosome complex exonuclease RRP42 (exosc7) of Dictyostelium discoideum (Social amoeba).